We begin with the raw amino-acid sequence, 440 residues long: Ankyrin repeat and MYND domain-containing protein 2 (440 aa).

3 ANK repeats span residues 45–74, 79–108, and 159–188; these read NGMT…DASC, HGYT…ETDV, and KLAG…NPLL. Cys320, Cys323, Cys332, Cys335, Cys341, Cys345, His353, and Cys357 together coordinate Zn(2+). An MYND-type zinc finger spans residues 320–357; the sequence is CTTCGEKGASKRCSVCKMVIYCDQTCQKTHWFAHKKMC. Residues 371-381 are compositionally biased toward basic and acidic residues; that stretch reads AAKHKRQEEKN. Residues 371–440 are disordered; sequence AAKHKRQEEK…APTGPQLSEE (70 aa).

In terms of assembly, interacts with the retinal-specific guanylyl cyclase GC1.

It localises to the cell projection. Its subcellular location is the cilium. May be involved in the trafficking of signaling proteins to the cilia. This is Ankyrin repeat and MYND domain-containing protein 2 (Ankmy2) from Mus musculus (Mouse).